We begin with the raw amino-acid sequence, 346 residues long: Angiopoietin-related protein 7 (346 aa).

Residues M1–L26 form the signal peptide. A coiled-coil region spans residues Q39–T119. N58 carries N-linked (GlcNAc...) asparagine glycosylation. In terms of domain architecture, Fibrinogen C-terminal spans Q122–D343. C131 and C162 are oxidised to a cystine. 2 N-linked (GlcNAc...) asparagine glycosylation sites follow: N253 and N267. C285 and C298 form a disulfide bridge.

In terms of assembly, homotetramer; disulfide-linked. Highly expressed in the cornea (at protein level). Expression is restricted to the stromal layer. Also detected at the junction between the corneal stromal layer and the conjuctiva. Not detected in the sclera.

The protein localises to the secreted. Functionally, has a role in the formation and organization of the extracellular matrix. In the eye, it functions as a mediator of dexamethasone-induced matrix deposition in the trabecular meshwork, the tissue responsible for the outflow of the ocular aqueous humor and for the maintenance of intraocular pressure. Is a negative regulator of angiogenesis in the cornea, and plays a major role in maintaining corneal avascularity and transparency. The chain is Angiopoietin-related protein 7 (ANGPTL7) from Homo sapiens (Human).